The primary structure comprises 481 residues: Proline--tRNA ligase (481 aa).

This sequence belongs to the class-II aminoacyl-tRNA synthetase family. ProS type 3 subfamily. In terms of assembly, homodimer.

It localises to the cytoplasm. The catalysed reaction is tRNA(Pro) + L-proline + ATP = L-prolyl-tRNA(Pro) + AMP + diphosphate. Its function is as follows. Catalyzes the attachment of proline to tRNA(Pro) in a two-step reaction: proline is first activated by ATP to form Pro-AMP and then transferred to the acceptor end of tRNA(Pro). This Saccharolobus islandicus (strain M.16.27) (Sulfolobus islandicus) protein is Proline--tRNA ligase.